The chain runs to 347 residues: Phenylalanine--tRNA ligase alpha subunit (347 aa).

Glu-261 serves as a coordination point for Mg(2+).

It belongs to the class-II aminoacyl-tRNA synthetase family. Phe-tRNA synthetase alpha subunit type 1 subfamily. In terms of assembly, tetramer of two alpha and two beta subunits. Mg(2+) serves as cofactor.

It localises to the cytoplasm. It carries out the reaction tRNA(Phe) + L-phenylalanine + ATP = L-phenylalanyl-tRNA(Phe) + AMP + diphosphate + H(+). This is Phenylalanine--tRNA ligase alpha subunit from Streptococcus uberis (strain ATCC BAA-854 / 0140J).